The chain runs to 120 residues: Large ribosomal subunit protein bL21 (120 aa).

Belongs to the bacterial ribosomal protein bL21 family. As to quaternary structure, part of the 50S ribosomal subunit. Contacts protein L20.

In terms of biological role, this protein binds to 23S rRNA in the presence of protein L20. This is Large ribosomal subunit protein bL21 from Roseiflexus sp. (strain RS-1).